Reading from the N-terminus, the 89-residue chain is Small ribosomal subunit protein uS15 (89 aa).

It belongs to the universal ribosomal protein uS15 family. As to quaternary structure, part of the 30S ribosomal subunit. Forms a bridge to the 50S subunit in the 70S ribosome, contacting the 23S rRNA.

Its function is as follows. One of the primary rRNA binding proteins, it binds directly to 16S rRNA where it helps nucleate assembly of the platform of the 30S subunit by binding and bridging several RNA helices of the 16S rRNA. Forms an intersubunit bridge (bridge B4) with the 23S rRNA of the 50S subunit in the ribosome. The polypeptide is Small ribosomal subunit protein uS15 (Pectobacterium carotovorum subsp. carotovorum (strain PC1)).